A 91-amino-acid chain; its full sequence is DNA-directed RNA polymerase subunit omega (91 aa).

Belongs to the RNA polymerase subunit omega family. In terms of assembly, the RNAP catalytic core consists of 2 alpha, 1 beta, 1 beta' and 1 omega subunit. When a sigma factor is associated with the core the holoenzyme is formed, which can initiate transcription.

It carries out the reaction RNA(n) + a ribonucleoside 5'-triphosphate = RNA(n+1) + diphosphate. In terms of biological role, promotes RNA polymerase assembly. Latches the N- and C-terminal regions of the beta' subunit thereby facilitating its interaction with the beta and alpha subunits. The polypeptide is DNA-directed RNA polymerase subunit omega (Psychromonas ingrahamii (strain DSM 17664 / CCUG 51855 / 37)).